The following is a 190-amino-acid chain: RNA pyrophosphohydrolase (190 aa).

Residues 6 to 149 (GYRPNVGIVL…KRSVYARALC (144 aa)) form the Nudix hydrolase domain. Positions 38 to 59 (GGMHSDETPVEAMYRELNEETG) match the Nudix box motif.

The protein belongs to the Nudix hydrolase family. RppH subfamily. Requires a divalent metal cation as cofactor.

Functionally, accelerates the degradation of transcripts by removing pyrophosphate from the 5'-end of triphosphorylated RNA, leading to a more labile monophosphorylated state that can stimulate subsequent ribonuclease cleavage. The sequence is that of RNA pyrophosphohydrolase from Xylella fastidiosa (strain Temecula1 / ATCC 700964).